A 295-amino-acid chain; its full sequence is Thioredoxin-related transmembrane protein 2 (295 aa).

The N-terminal stretch at 1–48 is a signal peptide; it reads MAVLAPLIALVYSVPRLSRWLARPYCLLSALLSIAFLLVRKLPPICNG. At 49–102 the chain is on the extracellular side; sequence LPTQREDGNPCDFDWREVEILMFLSAIVMMKNRRSITVEQHVGNIFMFSKVANA. A helical transmembrane segment spans residues 103–125; the sequence is ILFFRLDIRMGLLYLTLCIVFLM. A Thioredoxin domain is found at 114–269; the sequence is LLYLTLCIVF…LYQRAKKHSK (156 aa). At 126-295 the chain is on the cytoplasmic side; the sequence is TCKPPLYMGP…VPDGENKKDK (170 aa). A phosphoserine mark is found at Ser211 and Ser243. The disordered stretch occupies residues 266-295; the sequence is KHSKGGDMSEEKPVDPAPTTVPDGENKKDK. Over residues 269–279 the composition is skewed to basic and acidic residues; that stretch reads KGGDMSEEKPV. Residues 292–295 carry the Di-lysine motif motif; sequence KKDK.

Monomer. Homodimer; disulfide-linked. Occurs in both reduced and oxidized monomeric form. Oxidative conditions increase homodimerization. Interacts with CANX. Interacts with ATP2A2.

The protein resides in the endoplasmic reticulum membrane. It localises to the mitochondrion membrane. Endoplasmic reticulum and mitochondria-associated protein that probably functions as a regulator of cellular redox state and thereby regulates protein post-translational modification, protein folding and mitochondrial activity. Indirectly regulates neuronal proliferation, migration, and organization in the developing brain. This is Thioredoxin-related transmembrane protein 2 (Tmx2) from Mus musculus (Mouse).